Reading from the N-terminus, the 502-residue chain is Nostrin (502 aa).

Residues 1–260 form the F-BAR domain; that stretch reads MRDPLTDCSY…AISKVDVEKD (260 aa). At Ser114 the chain carries Phosphoserine. Coiled coils occupy residues 160–230 and 305–335; these read SMTQ…LNQY and KLWR…SSAS. In terms of domain architecture, REM-1 spans 292 to 372; it reads PMDKERRKSL…SYKLSTVLAD (81 aa). The disordered stretch occupies residues 413 to 437; sequence KAESKAPAGEQNNPSSSRPGSSVSQ. Over residues 423–437 the composition is skewed to low complexity; the sequence is QNNPSSSRPGSSVSQ. Positions 438–497 constitute an SH3 domain; sequence GNNQLCKALYTFQARQDDELNLEKGDIVTIHEKKEEGWWFGSLNGKKGHFPAAYVEELPP. Phosphoserine is present on Ser479.

As to quaternary structure, homotrimer. Interacts with DAB2. Interacts with NOS3, WASL and CAV1. Interacts (via SH3 domain) with DNM2; this interaction allows the recruitment of NOS3 to dynamin-positive structures. As to expression, over-expressed in brain microcapillaries from spontaneously hypertensive rats.

It localises to the cell membrane. The protein resides in the cytoplasmic vesicle. Its subcellular location is the cytoplasm. It is found in the cytoskeleton. The protein localises to the nucleus. In terms of biological role, multivalent adapter protein which may decrease NOS3 activity by inducing its translocation away from the plasma membrane. The polypeptide is Nostrin (Rattus norvegicus (Rat)).